The following is a 154-amino-acid chain: SsrA-binding protein (154 aa).

Belongs to the SmpB family.

The protein resides in the cytoplasm. Its function is as follows. Required for rescue of stalled ribosomes mediated by trans-translation. Binds to transfer-messenger RNA (tmRNA), required for stable association of tmRNA with ribosomes. tmRNA and SmpB together mimic tRNA shape, replacing the anticodon stem-loop with SmpB. tmRNA is encoded by the ssrA gene; the 2 termini fold to resemble tRNA(Ala) and it encodes a 'tag peptide', a short internal open reading frame. During trans-translation Ala-aminoacylated tmRNA acts like a tRNA, entering the A-site of stalled ribosomes, displacing the stalled mRNA. The ribosome then switches to translate the ORF on the tmRNA; the nascent peptide is terminated with the 'tag peptide' encoded by the tmRNA and targeted for degradation. The ribosome is freed to recommence translation, which seems to be the essential function of trans-translation. The protein is SsrA-binding protein of Treponema denticola (strain ATCC 35405 / DSM 14222 / CIP 103919 / JCM 8153 / KCTC 15104).